The chain runs to 84 residues: MANHISSEKRIRQTNARRLHNRYYARTARNAVKAFRALTDRTEAEKKYPVLASMLDRLAGKNIIHKNKAANLKSKLARRINTLA.

Belongs to the bacterial ribosomal protein bS20 family.

Binds directly to 16S ribosomal RNA. The chain is Small ribosomal subunit protein bS20 from Porphyromonas gingivalis (strain ATCC 33277 / DSM 20709 / CIP 103683 / JCM 12257 / NCTC 11834 / 2561).